The following is a 490-amino-acid chain: Bifunctional protein HldE (490 aa).

The ribokinase stretch occupies residues 1–328; that stretch reads MFSFDALLQA…LRRRILPHAS (328 aa). Residue 205 to 208 coordinates ATP; that stretch reads NRKE. Residue Asp275 is part of the active site. Residues 358–490 are cytidylyltransferase; that stretch reads FTNGCFDILH…LVARAREGQS (133 aa).

The protein in the N-terminal section; belongs to the carbohydrate kinase PfkB family. In the C-terminal section; belongs to the cytidylyltransferase family. In terms of assembly, homodimer.

It carries out the reaction D-glycero-beta-D-manno-heptose 7-phosphate + ATP = D-glycero-beta-D-manno-heptose 1,7-bisphosphate + ADP + H(+). It catalyses the reaction D-glycero-beta-D-manno-heptose 1-phosphate + ATP + H(+) = ADP-D-glycero-beta-D-manno-heptose + diphosphate. The protein operates within nucleotide-sugar biosynthesis; ADP-L-glycero-beta-D-manno-heptose biosynthesis; ADP-L-glycero-beta-D-manno-heptose from D-glycero-beta-D-manno-heptose 7-phosphate: step 1/4. It participates in nucleotide-sugar biosynthesis; ADP-L-glycero-beta-D-manno-heptose biosynthesis; ADP-L-glycero-beta-D-manno-heptose from D-glycero-beta-D-manno-heptose 7-phosphate: step 3/4. Its function is as follows. Catalyzes the phosphorylation of D-glycero-D-manno-heptose 7-phosphate at the C-1 position to selectively form D-glycero-beta-D-manno-heptose-1,7-bisphosphate. Catalyzes the ADP transfer from ATP to D-glycero-beta-D-manno-heptose 1-phosphate, yielding ADP-D-glycero-beta-D-manno-heptose. This is Bifunctional protein HldE from Rhodopseudomonas palustris (strain TIE-1).